Reading from the N-terminus, the 156-residue chain is Small ribosomal subunit protein uS7 (156 aa).

Belongs to the universal ribosomal protein uS7 family. Part of the 30S ribosomal subunit. Contacts proteins S9 and S11.

In terms of biological role, one of the primary rRNA binding proteins, it binds directly to 16S rRNA where it nucleates assembly of the head domain of the 30S subunit. Is located at the subunit interface close to the decoding center, probably blocks exit of the E-site tRNA. The protein is Small ribosomal subunit protein uS7 of Dehalococcoides mccartyi (strain ATCC BAA-2100 / JCM 16839 / KCTC 5957 / BAV1).